Consider the following 437-residue polypeptide: Glycogen synthase (437 aa).

K15 is a binding site for ADP-alpha-D-glucose.

The protein belongs to the glycosyltransferase 1 family. Bacterial/plant glycogen synthase subfamily.

The enzyme catalyses [(1-&gt;4)-alpha-D-glucosyl](n) + ADP-alpha-D-glucose = [(1-&gt;4)-alpha-D-glucosyl](n+1) + ADP + H(+). Its pathway is glycan biosynthesis; glycogen biosynthesis. Synthesizes alpha-1,4-glucan chains using ADP-glucose. In Thermus thermophilus (strain ATCC BAA-163 / DSM 7039 / HB27), this protein is Glycogen synthase.